The following is a 255-amino-acid chain: Major prion protein (255 aa).

Positions Met1 to Cys24 are cleaved as a signal peptide. Positions Lys25–Tyr41 are interaction with ADGRG6. An interaction with GRB2, ERI3 and SYN1 region spans residues Lys25 to Ala232. Positions Pro28 to Thr110 are disordered. 5 consecutive repeat copies span residues Pro54–Gln62, Pro63–Gln70, Pro71–Gln78, Pro79–Gln86, and Pro87–Gly94. Residues Pro54–Gly94 form a 5 X 8 AA tandem repeats of P-H-G-G-G-W-G-Q region. Over residues Gln55–Gly97 the composition is skewed to gly residues. The Cu(2+) site is built by His64, Gly65, Gly66, His72, Gly73, Gly74, His80, Gly81, Gly82, His88, Gly90, and Gly91. 3 N-linked (GlcNAc...) asparagine glycosylation sites follow: Asn174, Asn184, and Asn199. The cysteines at positions 182 and 216 are disulfide-linked. A lipid anchor (GPI-anchor amidated alanine) is attached at Ala232. The propeptide at Ser233–Gly255 is removed in mature form.

Belongs to the prion family. In terms of assembly, monomer and homodimer. Has a tendency to aggregate into amyloid fibrils containing a cross-beta spine, formed by a steric zipper of superposed beta-strands. Soluble oligomers may represent an intermediate stage on the path to fibril formation. Copper binding may promote oligomerization. Interacts with GRB2, APP, ERI3/PRNPIP and SYN1. Mislocalized cytosolically exposed PrP interacts with MGRN1; this interaction alters MGRN1 subcellular location and causes lysosomal enlargement. Interacts with APP. Interacts with KIAA1191. Interacts with ADGRG6.

It is found in the cell membrane. It localises to the golgi apparatus. Its function is as follows. Its primary physiological function is unclear. May play a role in neuronal development and synaptic plasticity. May be required for neuronal myelin sheath maintenance. May promote myelin homeostasis through acting as an agonist for ADGRG6 receptor. May play a role in iron uptake and iron homeostasis. Soluble oligomers are toxic to cultured neuroblastoma cells and induce apoptosis (in vitro). Association with GPC1 (via its heparan sulfate chains) targets PRNP to lipid rafts. Also provides Cu(2+) or Zn(2+) for the ascorbate-mediated GPC1 deaminase degradation of its heparan sulfate side chains. The protein is Major prion protein (PRNP) of Canis lupus familiaris (Dog).